The following is a 125-amino-acid chain: Nuclear envelope phosphatase-regulatory subunit 1 (125 aa).

Residue Met1 is modified to N-acetylmethionine. Helical transmembrane passes span 33–53 and 65–85; these read MLLIVVSVCTATGAWNWLIDP and WNHPFFTISCITLIGLFFAGI.

This sequence belongs to the CNEP1R1 family. Interacts with CTDNEP1; the complex dephosphorylates LPIN1 and LPIN2.

The protein resides in the nucleus membrane. It localises to the cytoplasm. In terms of biological role, forms with the serine/threonine protein phosphatase CTDNEP1 an active complex which dephosphorylates and may activate LPIN1 and LPIN2. LPIN1 and LPIN2 are phosphatidate phosphatases that catalyze the conversion of phosphatidic acid to diacylglycerol and control the metabolism of fatty acids at different levels. May indirectly modulate the lipid composition of nuclear and/or endoplasmic reticulum membranes and be required for proper nuclear membrane morphology and/or dynamics. May also indirectly regulate the production of lipid droplets and triacylglycerol. This is Nuclear envelope phosphatase-regulatory subunit 1 (CNEP1R1) from Bos taurus (Bovine).